Here is a 158-residue protein sequence, read N- to C-terminus: Pleckstrin homology domain-containing family J member 1 (158 aa).

Residues 15-108 (PTQRAAELGM…WIDAIIKASY (94 aa)) enclose the PH domain.

In Danio rerio (Zebrafish), this protein is Pleckstrin homology domain-containing family J member 1 (plekhj1).